Consider the following 611-residue polypeptide: Polyphenol oxidase 4 (611 aa).

Cu cation-binding residues include His-57, His-82, His-91, His-251, His-255, and His-283. The 2'-(S-cysteinyl)-histidine (Cys-His) cross-link spans 80 to 82 (CTH). A substrate-binding site is contributed by His-255. The propeptide at 380–611 (IKKSEGGKNP…GGLGALGRIF (232 aa)) is removed in mature form.

Belongs to the tyrosinase family. As to quaternary structure, heterotetramer. Requires Cu(2+) as cofactor. In terms of processing, the C-ter is probably cleaved after Gly-379 since the mature active protein is smaller than the protein encoded by the gene.

It carries out the reaction 2 L-dopa + O2 = 2 L-dopaquinone + 2 H2O. The enzyme catalyses L-tyrosine + O2 = L-dopaquinone + H2O. In terms of biological role, copper-containing oxidase that catalyzes both the o-hydroxylation of monophenols and the subsequent oxidation of the resulting o-diphenols into reactive o-quinones, which evolve spontaneously to produce intermediates, which associate in dark brown pigments. Involved in the initial step of melanin synthesis. Melanins constitute a mechanism of defense and resistance to stress such as UV radiations, free radicals, gamma rays, dehydratation and extreme temperatures, and contribute to the fungal cell-wall resistance against hydrolytic enzymes in avoiding cellular lysis. Fungal pigments are also involved in the formation and stability of spores. The polypeptide is Polyphenol oxidase 4 (PPO4) (Agaricus bisporus (White button mushroom)).